The primary structure comprises 430 residues: Tol-Pal system protein TolB (430 aa).

The N-terminal stretch at 1–21 is a signal peptide; that stretch reads MKQALRVAFGFLMLWAAVLHA.

The protein belongs to the TolB family. As to quaternary structure, the Tol-Pal system is composed of five core proteins: the inner membrane proteins TolA, TolQ and TolR, the periplasmic protein TolB and the outer membrane protein Pal. They form a network linking the inner and outer membranes and the peptidoglycan layer.

The protein resides in the periplasm. Functionally, part of the Tol-Pal system, which plays a role in outer membrane invagination during cell division and is important for maintaining outer membrane integrity. TolB occupies a key intermediary position in the Tol-Pal system because it communicates directly with both membrane-embedded components, Pal in the outer membrane and TolA in the inner membrane. This chain is Tol-Pal system protein TolB, found in Salmonella enteritidis PT4 (strain P125109).